The following is a 67-amino-acid chain: MGSFSLTHWIIVLIIVVLIFGTKKLRNVGKDLGGAVHDFKQGLNEGTDGKEAQKDDVIEHKKDEDKA.

A helical membrane pass occupies residues 1–21 (MGSFSLTHWIIVLIIVVLIFG). Residues 43–67 (LNEGTDGKEAQKDDVIEHKKDEDKA) form a disordered region. Positions 47 to 67 (TDGKEAQKDDVIEHKKDEDKA) are enriched in basic and acidic residues.

Belongs to the TatA/E family. In terms of assembly, the Tat system comprises two distinct complexes: a TatABC complex, containing multiple copies of TatA, TatB and TatC subunits, and a separate TatA complex, containing only TatA subunits. Substrates initially bind to the TatABC complex, which probably triggers association of the separate TatA complex to form the active translocon.

It localises to the cell inner membrane. Its function is as follows. Part of the twin-arginine translocation (Tat) system that transports large folded proteins containing a characteristic twin-arginine motif in their signal peptide across membranes. TatA could form the protein-conducting channel of the Tat system. In Neisseria gonorrhoeae (strain ATCC 700825 / FA 1090), this protein is Sec-independent protein translocase protein TatA.